Consider the following 428-residue polypeptide: Gamma-glutamyl phosphate reductase (428 aa).

Belongs to the gamma-glutamyl phosphate reductase family.

It is found in the cytoplasm. It carries out the reaction L-glutamate 5-semialdehyde + phosphate + NADP(+) = L-glutamyl 5-phosphate + NADPH + H(+). Its pathway is amino-acid biosynthesis; L-proline biosynthesis; L-glutamate 5-semialdehyde from L-glutamate: step 2/2. Its function is as follows. Catalyzes the NADPH-dependent reduction of L-glutamate 5-phosphate into L-glutamate 5-semialdehyde and phosphate. The product spontaneously undergoes cyclization to form 1-pyrroline-5-carboxylate. The polypeptide is Gamma-glutamyl phosphate reductase (Agrobacterium fabrum (strain C58 / ATCC 33970) (Agrobacterium tumefaciens (strain C58))).